A 328-amino-acid polypeptide reads, in one-letter code: Alanine racemase (328 aa).

The active-site Proton acceptor; specific for D-alanine is the K33. K33 is modified (N6-(pyridoxal phosphate)lysine). R118 contributes to the substrate binding site. Y237 acts as the Proton acceptor; specific for L-alanine in catalysis. M283 provides a ligand contact to substrate.

It belongs to the alanine racemase family. Pyridoxal 5'-phosphate serves as cofactor.

The catalysed reaction is L-alanine = D-alanine. It participates in amino-acid biosynthesis; D-alanine biosynthesis; D-alanine from L-alanine: step 1/1. Catalyzes the interconversion of L-alanine and D-alanine. May also act on other amino acids. This is Alanine racemase (alr) from Campylobacter jejuni subsp. doylei (strain ATCC BAA-1458 / RM4099 / 269.97).